A 374-amino-acid chain; its full sequence is C-X-C chemokine receptor type 5 (374 aa).

The Extracellular segment spans residues 1–57 (MNYPLTLDMGSITYNMDDLYKELAFYSNSTEIPLQDSNFCSTVEGPLLTSFKAVFMP). N-linked (GlcNAc...) asparagine glycosylation is present at N28. A helical membrane pass occupies residues 58–78 (VAYSLIFLLGMMGNILVLVIL). Residues 79-90 (ERHRHTRSSTET) lie on the Cytoplasmic side of the membrane. Residues 91–111 (FLFHLAVADLLLVFILPFAVA) form a helical membrane-spanning segment. Over 112–126 (EGSVGWVLGTFLCKT) the chain is Extracellular. A disulfide bridge links C124 with C204. Residues 127–147 (VIALHKINFYCSSLLLACIAV) form a helical membrane-spanning segment. Residues 148–169 (DRYLAIVHAVHAYRRRRLLSIH) lie on the Cytoplasmic side of the membrane. Residues 170–190 (ITCTAIWLAGFLFALPELLFA) traverse the membrane as a helical segment. The Extracellular portion of the chain corresponds to 191-221 (KVGQPHNNDSLPQCTFSQENEAETRAWFTSR). N-linked (GlcNAc...) asparagine glycosylation occurs at N198. The chain crosses the membrane as a helical span at residues 222-242 (FLYHIGGFLLPMLVMGWCYVG). Residues 243-261 (VVHRLLQAQRRPQRQKAVR) lie on the Cytoplasmic side of the membrane. A helical transmembrane segment spans residues 262–282 (VAILVTSIFFLCWSPYHIVIF). Residues 283-306 (LDTLERLKAVNSSCELSGYLSVAI) are Extracellular-facing. The chain crosses the membrane as a helical span at residues 307–327 (TLCEFLGLAHCCLNPMLYTFA). At 328–374 (GVKFRSDLSRLLTKLGCAGPASLCQLFPNWRKSSLSESENATSLTTF) the chain is on the cytoplasmic side.

Belongs to the G-protein coupled receptor 1 family. Mainly in spleen, in resting B-cells.

The protein localises to the cell membrane. Cytokine receptor that binds to B-lymphocyte chemoattractant (BLC). Involved in B-cell migration into B-cell follicles of spleen and Peyer patches but not into those of mesenteric or peripheral lymph nodes. This chain is C-X-C chemokine receptor type 5 (Cxcr5), found in Mus musculus (Mouse).